Consider the following 775-residue polypeptide: Ubiquitin carboxyl-terminal hydrolase 14 (775 aa).

The segment at 1 to 108 (MSCPHLTETN…EDLYDYFYVP (108 aa)) adopts a UBP-type 1; degenerate zinc-finger fold. Positions 25, 28, 41, 44, 49, 56, 60, 66, 153, 155, 174, 177, 186, 189, 194, 207, 211, 217, 236, and 239 each coordinate Zn(2+). The UBP-type 2 zinc-finger motif lies at 151–259 (TTCDHIINLP…THMLNFGIDI (109 aa)). Residues 300–774 (TGLKNLGNSC…TGYVYLFERL (475 aa)) form the USP domain. The active-site Nucleophile is the cysteine 309. Serine 456 carries the phosphoserine modification. UBA domains lie at 576–617 (EWNQ…LFEH) and 639–679 (SVSE…ILNH). Residue histidine 730 is the Proton acceptor of the active site.

Belongs to the peptidase C19 family.

It catalyses the reaction Thiol-dependent hydrolysis of ester, thioester, amide, peptide and isopeptide bonds formed by the C-terminal Gly of ubiquitin (a 76-residue protein attached to proteins as an intracellular targeting signal).. The protein is Ubiquitin carboxyl-terminal hydrolase 14 (ubp14) of Schizosaccharomyces pombe (strain 972 / ATCC 24843) (Fission yeast).